A 437-amino-acid polypeptide reads, in one-letter code: Adenylosuccinate synthetase (437 aa).

Residues 12 to 18 (GDEGKGK) and 40 to 42 (GHT) each bind GTP. The active-site Proton acceptor is the Asp-13. 2 residues coordinate Mg(2+): Asp-13 and Gly-40. IMP contacts are provided by residues 13–16 (DEGK), 38–41 (NAGH), Thr-128, Arg-142, Gln-223, Thr-238, and Arg-302. The active-site Proton donor is His-41. The tract at residues 119–138 (QRGERRIGTTGRGIGPTYAD) is disordered. 298 to 304 (TTTGRRR) provides a ligand contact to substrate. Residues Arg-304, 330–332 (KLD), and 412–414 (SLG) contribute to the GTP site.

It belongs to the adenylosuccinate synthetase family. As to quaternary structure, homodimer. It depends on Mg(2+) as a cofactor.

It is found in the cytoplasm. The catalysed reaction is IMP + L-aspartate + GTP = N(6)-(1,2-dicarboxyethyl)-AMP + GDP + phosphate + 2 H(+). The protein operates within purine metabolism; AMP biosynthesis via de novo pathway; AMP from IMP: step 1/2. Functionally, plays an important role in the de novo pathway of purine nucleotide biosynthesis. Catalyzes the first committed step in the biosynthesis of AMP from IMP. The polypeptide is Adenylosuccinate synthetase (Synechococcus sp. (strain WH7803)).